The sequence spans 597 residues: Cytosolic Fe-S cluster assembly factor nar1 (597 aa).

[4Fe-4S] cluster-binding residues include C20, C62, C65, C68, C216, and C271. A disordered region spans residues 428 to 449; the sequence is RASRLPGGNRRLPVGRGAASGS. C462 and C466 together coordinate [4Fe-4S] cluster. Residues 479 to 505 are disordered; the sequence is REASSSVQSSTSAEVPDSSSKPTPHEQ.

Belongs to the NARF family.

Its function is as follows. Component of the cytosolic Fe/S protein assembly machinery. Required for maturation of extramitochondrial Fe/S proteins. May play a role in the transfer of pre-assembled Fe/S clusters to target apoproteins. The sequence is that of Cytosolic Fe-S cluster assembly factor nar1 (nar1) from Aspergillus niger (strain ATCC MYA-4892 / CBS 513.88 / FGSC A1513).